A 419-amino-acid polypeptide reads, in one-letter code: Peptide chain release factor subunit 1 (419 aa).

It belongs to the eukaryotic release factor 1 family. Heterodimer of two subunits, one of which binds GTP.

It is found in the cytoplasm. Its function is as follows. Directs the termination of nascent peptide synthesis (translation) in response to the termination codons UAA, UAG and UGA. In Methanococcus maripaludis (strain C7 / ATCC BAA-1331), this protein is Peptide chain release factor subunit 1.